The following is an 88-amino-acid chain: Small ribosomal subunit protein uS17 (88 aa).

It belongs to the universal ribosomal protein uS17 family. Part of the 30S ribosomal subunit.

In terms of biological role, one of the primary rRNA binding proteins, it binds specifically to the 5'-end of 16S ribosomal RNA. This is Small ribosomal subunit protein uS17 from Helicobacter hepaticus (strain ATCC 51449 / 3B1).